Reading from the N-terminus, the 532-residue chain is 2,3-bisphosphoglycerate-independent phosphoglycerate mutase (532 aa).

Positions 15 and 65 each coordinate Mn(2+). The active-site Phosphoserine intermediate is the Ser-65. Residues His-126, 156 to 157 (RD), Arg-188, Arg-194, 258 to 261 (RPDR), and Lys-331 contribute to the substrate site. Asp-398, His-402, Asp-439, His-440, and His-457 together coordinate Mn(2+).

This sequence belongs to the BPG-independent phosphoglycerate mutase family. Monomer. Requires Mn(2+) as cofactor.

The catalysed reaction is (2R)-2-phosphoglycerate = (2R)-3-phosphoglycerate. The protein operates within carbohydrate degradation; glycolysis; pyruvate from D-glyceraldehyde 3-phosphate: step 3/5. Its function is as follows. Catalyzes the interconversion of 2-phosphoglycerate and 3-phosphoglycerate. In Gloeothece citriformis (strain PCC 7424) (Cyanothece sp. (strain PCC 7424)), this protein is 2,3-bisphosphoglycerate-independent phosphoglycerate mutase.